The sequence spans 242 residues: Phosphoribosylaminoimidazole-succinocarboxamide synthase (242 aa).

The protein belongs to the SAICAR synthetase family.

The catalysed reaction is 5-amino-1-(5-phospho-D-ribosyl)imidazole-4-carboxylate + L-aspartate + ATP = (2S)-2-[5-amino-1-(5-phospho-beta-D-ribosyl)imidazole-4-carboxamido]succinate + ADP + phosphate + 2 H(+). Its pathway is purine metabolism; IMP biosynthesis via de novo pathway; 5-amino-1-(5-phospho-D-ribosyl)imidazole-4-carboxamide from 5-amino-1-(5-phospho-D-ribosyl)imidazole-4-carboxylate: step 1/2. The chain is Phosphoribosylaminoimidazole-succinocarboxamide synthase from Trichodesmium erythraeum (strain IMS101).